The chain runs to 397 residues: Purine ribonucleoside efflux pump NepI (397 aa).

The Cytoplasmic segment spans residues 1–21; sequence MNENIAEKFRADGVARPNWSA. Residues 22–42 traverse the membrane as a helical segment; that stretch reads VFAVAFCVACLITVEFLPVSL. Over 43–54 the chain is Periplasmic; the sequence is LTPMAQDLGISE. A helical membrane pass occupies residues 55–75; the sequence is GIAGQSVTVTAFVAMFSSLFI. The Cytoplasmic portion of the chain corresponds to 76–85; the sequence is TQIIQATDRR. Residues 86–106 traverse the membrane as a helical segment; sequence YIVILFAVLLTASCLMVSFAN. Residue Ser107 is a topological domain, periplasmic. Residues 108–128 traverse the membrane as a helical segment; the sequence is FTLLLLGRACLGLALGGFWAM. The Cytoplasmic portion of the chain corresponds to 129 to 147; it reads SASLTMRLVPARTVPKALS. A helical transmembrane segment spans residues 148-168; the sequence is VIFGAVSIALVIAAPLGSFLG. Over 169–175 the chain is Periplasmic; it reads GIIGWRN. The chain crosses the membrane as a helical span at residues 176–196; the sequence is VFNAAAVMGVLCVIWVVKSLP. Residues 197-215 are Cytoplasmic-facing; it reads SLPGEPSHQKQNMFSLLQR. Residues 216-236 form a helical membrane-spanning segment; it reads PGVMAGMIAIFMSFAGQFAFF. Over 237–255 the chain is Periplasmic; the sequence is TYIRPVYMNLAGFDVDGLT. A helical transmembrane segment spans residues 256–276; that stretch reads LVLLSFGIASFVGTSFSSYVL. The Cytoplasmic portion of the chain corresponds to 277–281; it reads KRSVK. The helical transmembrane segment at 282–302 threads the bilayer; that stretch reads LALAGAPLLLALSALTLIVWG. The Periplasmic portion of the chain corresponds to 303–305; sequence SDK. A helical membrane pass occupies residues 306 to 326; sequence TVAAVIAIIWGLAFALVPVGW. Over 327–343 the chain is Cytoplasmic; sequence STWITRSLADQAEKAGS. A helical transmembrane segment spans residues 344-364; that stretch reads IQVAVIQLANTCGAAVGGYAL. Residues 365-366 lie on the Periplasmic side of the membrane; that stretch reads DN. A helical transmembrane segment spans residues 367–387; that stretch reads FGLLSPLALSGCLMLLTALVV. The Cytoplasmic portion of the chain corresponds to 388–397; the sequence is AAKVRITPMS.

It belongs to the major facilitator superfamily. DHA1 family. NepI (TC 2.A.1.2.26) subfamily.

It is found in the cell inner membrane. The enzyme catalyses inosine(in) + H(+)(out) = inosine(out) + H(+)(in). It carries out the reaction guanosine(in) + H(+)(out) = guanosine(out) + H(+)(in). In terms of biological role, involved in the efflux of purine ribonucleosides, such as inosine and guanosine. The chain is Purine ribonucleoside efflux pump NepI from Salmonella enteritidis PT4 (strain P125109).